Here is a 93-residue protein sequence, read N- to C-terminus: Acylphosphatase (93 aa).

In terms of domain architecture, Acylphosphatase-like spans 6 to 93 (RLVAWVRGQV…RGGYEGFAIR (88 aa)). Catalysis depends on residues Arg-21 and Asn-40.

It belongs to the acylphosphatase family.

The enzyme catalyses an acyl phosphate + H2O = a carboxylate + phosphate + H(+). The polypeptide is Acylphosphatase (acyP) (Streptomyces coelicolor (strain ATCC BAA-471 / A3(2) / M145)).